We begin with the raw amino-acid sequence, 303 residues long: Uridine diphosphate glucose pyrophosphatase NUDT22 (303 aa).

Substrate-binding residues include Phe56, Tyr87, Arg139, Ala144, Asp151, His156, and Glu158. The Nudix hydrolase domain occupies 118-285 (ADPLGVGAAL…KGAIILYNRV (168 aa)). Residues 148–168 (GLVDVPGGHPEPQALCPGGSP) are disordered. Residues 175-196 (GQLVVHELFSSVLQEICDEVNL) carry the Nudix box motif. Mg(2+) contacts are provided by Glu189 and Glu193. Residue Ser274 participates in substrate binding.

Belongs to the Nudix hydrolase family. Mg(2+) serves as cofactor.

The catalysed reaction is UDP-sugar + H2O = UMP + alpha-D-aldose 1-phosphate.. Hydrolyzes UDP-glucose to glucose 1-phosphate and UMP and UDP-galactose to galactose 1-phosphate and UMP. Preferred substrate is UDP-glucose. The chain is Uridine diphosphate glucose pyrophosphatase NUDT22 (NUDT22) from Homo sapiens (Human).